We begin with the raw amino-acid sequence, 433 residues long: Actin-related protein 4 (433 aa).

Positions 289–317 are disordered; that stretch reads GSDEEMNEEPSKPIEQTENNEVSQQDSSV. The segment covering 302–317 has biased composition (polar residues); the sequence is IEQTENNEVSQQDSSV.

It belongs to the actin family. ARP4 subfamily. Component of the NuA4 histone acetyltransferase complex, of the INO80 chromatin remodeling complex, and of the SWR1 chromatin remodeling complex.

The protein localises to the nucleus. Its function is as follows. Chromatin interaction component of the NuA4 histone acetyltransferase complex which is involved in transcriptional activation of selected genes principally by acetylation of nucleosomal histone H4 and H2A. The NuA4 complex is also involved in DNA repair. Is required for NuA4 complex integrity. Component of the SWR1 complex which mediates the ATP-dependent exchange of histone H2A for the H2A variant HZT1 leading to transcriptional regulation of selected genes by chromatin remodeling. Component of the INO80 complex which remodels chromatin by shifting nucleosomes and is involved in DNA repair. In Schizosaccharomyces pombe (strain 972 / ATCC 24843) (Fission yeast), this protein is Actin-related protein 4 (alp5).